Reading from the N-terminus, the 707-residue chain is Bone morphogenetic protein 1 (707 aa).

The segment at 57–90 (SGAATNISRPEKGRRTRKERRRSREKRASTSRPE) is disordered. N-linked (GlcNAc...) asparagine glycosylation occurs at Asn-62. The span at 68–81 (KGRRTRKERRRSRE) shows a compositional bias: basic residues. Residues 84–283 (ASTSRPERVW…AQARKLYKCP (200 aa)) enclose the Peptidase M12A domain. Asn-105 carries an N-linked (GlcNAc...) asparagine glycan. Intrachain disulfides connect Cys-126-Cys-282, Cys-146-Cys-168, Cys-148-Cys-149, and Cys-285-Cys-311. His-176 contributes to the Zn(2+) binding site. Glu-177 is an active-site residue. 2 residues coordinate Zn(2+): His-180 and His-186. CUB domains lie at 285–397 (CGET…YEAL) and 398–509 (CGGE…NYFK). Asn-295 and Asn-326 each carry an N-linked (GlcNAc...) asparagine glycan. Disulfide bonds link Cys-338-Cys-360, Cys-398-Cys-424, Cys-451-Cys-473, Cys-514-Cys-526, Cys-522-Cys-535, Cys-537-Cys-550, Cys-554-Cys-580, and Cys-607-Cys-629. Positions 510-551 (EVDECSRPNNGGCEQRCVNTLGSYKCACDPGYELGQDKKSCE) constitute an EGF-like; calcium-binding domain. A CUB 3 domain is found at 554-666 (CGGFLTKLNG…KGFQANFFSE (113 aa)). N-linked (GlcNAc...) asparagine glycosylation occurs at Asn-562. The interval 682-707 (RGQQNQAPKRVRPRMRLRTVKKTRPP) is disordered. Positions 690-707 (KRVRPRMRLRTVKKTRPP) are enriched in basic residues.

As to quaternary structure, interacts with olfml3/ont1. Zn(2+) serves as cofactor. Post-translationally, proteolytically activated in the trans-Golgi network by furin-like/paired basic proprotein convertases, cleavage is not required for secretion.

It is found in the golgi apparatus. Its subcellular location is the trans-Golgi network. The protein localises to the secreted. The protein resides in the extracellular space. It localises to the extracellular matrix. Metalloprotease involved in pattern formation in gastrula and later differentiation of developing organs. Able to cleave chordin (chrd), suggesting that it may act in dorsoventral patterning during early development by regulating the chordin (chrd) activity. The polypeptide is Bone morphogenetic protein 1 (bmp1) (Xenopus laevis (African clawed frog)).